We begin with the raw amino-acid sequence, 248 residues long: Granulin (248 aa).

This sequence belongs to the polyhedrin family.

In terms of biological role, component of the virus occlusion bodies, which are large proteinaceous structures, that protect the virus from the outside environment for extended periods until they are ingested by insect larvae. This Choristoneura fumiferana (Spruce budworm moth) protein is Granulin.